Here is a 542-residue protein sequence, read N- to C-terminus: Calcium/calmodulin-dependent protein kinase type II subunit beta (542 aa).

In terms of domain architecture, Protein kinase spans 14–272; it reads YQLYEDIGKG…AHEALKHPWV (259 aa). Position 17 is a phosphotyrosine (Y17). Residues 20–28 and K43 contribute to the ATP site; that span reads IGKGAFSVV. D136 serves as the catalytic Proton acceptor. Positions 283–292 are autoinhibitory domain; it reads HRQETVECLK. A Phosphothreonine; by autocatalysis modification is found at T287. Positions 291–301 are calmodulin-binding; the sequence is LKKFNARRKLK. A phosphothreonine; by autocatalysis mark is found at T306 and T307. Residues 349–376 form a disordered region; sequence ADGVKPQTNSTKNSSAITSPKGSLPPAA. The segment covering 354–369 has biased composition (polar residues); that stretch reads PQTNSTKNSSAITSPK. Phosphoserine is present on residues S367, S371, S394, and S397. T400 and T401 each carry phosphothreonine.

Belongs to the protein kinase superfamily. CAMK Ser/Thr protein kinase family. CaMK subfamily. As to quaternary structure, CAMK2 is composed of 4 different chains: alpha (CAMK2A), beta (CAMK2B), gamma (CAMK2G), and delta (CAMK2D). The different isoforms assemble into homo- or heteromultimeric holoenzymes composed of 12 subunits with two hexameric rings stacked one on top of the other. Interacts with SYNGAP1, CAMK2N2 and MPDZ. Interacts with FOXO3. Interacts (when in a kinase inactive state not associated with calmodulin) with ARC; leading to target ARC to inactive synapses. Interacts with CAMK2N1; this interaction requires CAMK2B activation by Ca(2+). In terms of processing, autophosphorylation of Thr-287 following activation by Ca(2+)/calmodulin. Phosphorylation of Thr-287 locks the kinase into an activated state.

It is found in the cytoplasm. Its subcellular location is the cytoskeleton. The protein localises to the microtubule organizing center. The protein resides in the centrosome. It localises to the sarcoplasmic reticulum membrane. It is found in the synapse. The catalysed reaction is L-seryl-[protein] + ATP = O-phospho-L-seryl-[protein] + ADP + H(+). It catalyses the reaction L-threonyl-[protein] + ATP = O-phospho-L-threonyl-[protein] + ADP + H(+). With respect to regulation, activated by Ca(2+)/calmodulin. Binding of calmodulin results in conformational change that relieves intrasteric autoinhibition and allows autophosphorylation of Thr-287 which turns the kinase in a constitutively active form and confers to the kinase a Ca(2+)-independent activity. Functionally, calcium/calmodulin-dependent protein kinase that functions autonomously after Ca(2+)/calmodulin-binding and autophosphorylation, and is involved in dendritic spine and synapse formation, neuronal plasticity and regulation of sarcoplasmic reticulum Ca(2+) transport in skeletal muscle. In neurons, plays an essential structural role in the reorganization of the actin cytoskeleton during plasticity by binding and bundling actin filaments in a kinase-independent manner. This structural function is required for correct targeting of CaMK2A, which acts downstream of NMDAR to promote dendritic spine and synapse formation and maintain synaptic plasticity which enables long-term potentiation (LTP) and hippocampus-dependent learning. In developing hippocampal neurons, promotes arborization of the dendritic tree and in mature neurons, promotes dendritic remodeling. Also regulates the migration of developing neurons. Participates in the modulation of skeletal muscle function in response to exercise. In slow-twitch muscles, is involved in regulation of sarcoplasmic reticulum (SR) Ca(2+) transport and in fast-twitch muscle participates in the control of Ca(2+) release from the SR through phosphorylation of triadin, a ryanodine receptor-coupling factor, and phospholamban (PLN/PLB), an endogenous inhibitor of SERCA2A/ATP2A2. In response to interferon-gamma (IFN-gamma) stimulation, catalyzes phosphorylation of STAT1, stimulating the JAK-STAT signaling pathway. Phosphorylates reticulophagy regulator RETREG1 at 'Thr-134' under endoplasmic reticulum stress conditions which enhances RETREG1 oligomerization and its membrane scission and reticulophagy activity. The chain is Calcium/calmodulin-dependent protein kinase type II subunit beta (Camk2b) from Mus musculus (Mouse).